Reading from the N-terminus, the 348-residue chain is Mannonate dehydratase (348 aa).

The protein belongs to the mannonate dehydratase family. Requires Fe(2+) as cofactor. The cofactor is Mn(2+).

The enzyme catalyses D-mannonate = 2-dehydro-3-deoxy-D-gluconate + H2O. It functions in the pathway carbohydrate metabolism; pentose and glucuronate interconversion. Functionally, catalyzes the dehydration of D-mannonate. The protein is Mannonate dehydratase of Staphylococcus haemolyticus (strain JCSC1435).